The chain runs to 287 residues: MPIILENISVFYSRNTPLEISALKDVNLRIEKGEFVGILGEKGAGKSTLIKLFNGLLRPDSGRITVNGLDPSSKKVKSRVGMVFQQPADQLFCRTVYEEIAFGPLNFGYSRKETEERVFEALEAASLERSMLSRDPLSLSGGEMQRVALAGALALRPDYLVLDEPITGLDPAGKKEILETLKKIKGQGTTIITVTHNLKGFFPLLERIVLIKEGRISFQGSRKEYMETENVPLPPVASMMRELHSRGIQVNPAVFTVEEALKEILRVKSMIEKEKAEKERAEKQTKK.

The 234-residue stretch at 5 to 238 (LENISVFYSR…ENVPLPPVAS (234 aa)) folds into the ABC transporter domain. 40–47 (GEKGAGKS) contributes to the ATP binding site.

It belongs to the ABC transporter superfamily.

The protein resides in the cell membrane. Probably part of an ABC transporter complex. Responsible for energy coupling to the transport system. This is Putative ABC transporter ATP-binding protein MM_1038 from Methanosarcina mazei (strain ATCC BAA-159 / DSM 3647 / Goe1 / Go1 / JCM 11833 / OCM 88) (Methanosarcina frisia).